The chain runs to 238 residues: Ribonuclease PH (238 aa).

Phosphate contacts are provided by residues arginine 86 and glycine 124–arginine 126.

The protein belongs to the RNase PH family. Homohexameric ring arranged as a trimer of dimers.

It catalyses the reaction tRNA(n+1) + phosphate = tRNA(n) + a ribonucleoside 5'-diphosphate. Phosphorolytic 3'-5' exoribonuclease that plays an important role in tRNA 3'-end maturation. Removes nucleotide residues following the 3'-CCA terminus of tRNAs; can also add nucleotides to the ends of RNA molecules by using nucleoside diphosphates as substrates, but this may not be physiologically important. Probably plays a role in initiation of 16S rRNA degradation (leading to ribosome degradation) during starvation. The sequence is that of Ribonuclease PH from Haemophilus influenzae (strain PittEE).